We begin with the raw amino-acid sequence, 301 residues long: Protoheme IX farnesyltransferase (301 aa).

9 helical membrane passes run 20-42 (FTEL…GMWL), 55-75 (VDVI…SGAF), 105-125 (ALMV…MTTW), 126-146 (QAGV…SLYA), 150-172 (LVSN…WFAV), 176-198 (FSMV…FYAI), 227-247 (MFFW…LGIV), 249-269 (VILA…GFKM), and 280-300 (FIYS…ISIF).

Belongs to the UbiA prenyltransferase family. Protoheme IX farnesyltransferase subfamily. As to quaternary structure, interacts with CtaA.

It localises to the cell membrane. It carries out the reaction heme b + (2E,6E)-farnesyl diphosphate + H2O = Fe(II)-heme o + diphosphate. The protein operates within porphyrin-containing compound metabolism; heme O biosynthesis; heme O from protoheme: step 1/1. Converts heme B (protoheme IX) to heme O by substitution of the vinyl group on carbon 2 of heme B porphyrin ring with a hydroxyethyl farnesyl side group. The chain is Protoheme IX farnesyltransferase from Listeria welshimeri serovar 6b (strain ATCC 35897 / DSM 20650 / CCUG 15529 / CIP 8149 / NCTC 11857 / SLCC 5334 / V8).